Consider the following 205-residue polypeptide: Holliday junction branch migration complex subunit RuvA (205 aa).

Residues 1 to 62 (MFEYVTGYVE…EDIMALYGFK (62 aa)) form a domain I region. Residues 63–141 (TREERLLFTK…DVVPDAFVDL (79 aa)) form a domain II region. Positions 142-152 (FSDTESFDTKK) are flexible linker. The interval 153 to 205 (GSSVELDEALEALRALGYAEREVSRVVPELLKESLTTDQYIKKALSLLLNGKR) is domain III.

Belongs to the RuvA family. In terms of assembly, homotetramer. Forms an RuvA(8)-RuvB(12)-Holliday junction (HJ) complex. HJ DNA is sandwiched between 2 RuvA tetramers; dsDNA enters through RuvA and exits via RuvB. An RuvB hexamer assembles on each DNA strand where it exits the tetramer. Each RuvB hexamer is contacted by two RuvA subunits (via domain III) on 2 adjacent RuvB subunits; this complex drives branch migration. In the full resolvosome a probable DNA-RuvA(4)-RuvB(12)-RuvC(2) complex forms which resolves the HJ.

Its subcellular location is the cytoplasm. Its function is as follows. The RuvA-RuvB-RuvC complex processes Holliday junction (HJ) DNA during genetic recombination and DNA repair, while the RuvA-RuvB complex plays an important role in the rescue of blocked DNA replication forks via replication fork reversal (RFR). RuvA specifically binds to HJ cruciform DNA, conferring on it an open structure. The RuvB hexamer acts as an ATP-dependent pump, pulling dsDNA into and through the RuvAB complex. HJ branch migration allows RuvC to scan DNA until it finds its consensus sequence, where it cleaves and resolves the cruciform DNA. The chain is Holliday junction branch migration complex subunit RuvA from Bacillus mycoides (strain KBAB4) (Bacillus weihenstephanensis).